We begin with the raw amino-acid sequence, 221 residues long: Iron-sulfur cluster repair protein YtfE (221 aa).

The protein belongs to the RIC family. YtfE subfamily. In terms of assembly, homodimer.

It localises to the cytoplasm. In terms of biological role, di-iron-containing protein involved in the repair of iron-sulfur clusters damaged by oxidative and nitrosative stress conditions. The protein is Iron-sulfur cluster repair protein YtfE of Yersinia pestis bv. Antiqua (strain Antiqua).